The chain runs to 351 residues: DNA polymerase IV (351 aa).

In terms of domain architecture, UmuC spans 4–185 (IIHVDMDCFF…LPLAKIPGVG (182 aa)). Mg(2+)-binding residues include Asp-8 and Asp-103. Glu-104 is a catalytic residue.

This sequence belongs to the DNA polymerase type-Y family. In terms of assembly, monomer. Mg(2+) serves as cofactor.

The protein localises to the cytoplasm. The enzyme catalyses DNA(n) + a 2'-deoxyribonucleoside 5'-triphosphate = DNA(n+1) + diphosphate. Poorly processive, error-prone DNA polymerase involved in untargeted mutagenesis. Copies undamaged DNA at stalled replication forks, which arise in vivo from mismatched or misaligned primer ends. These misaligned primers can be extended by PolIV. Exhibits no 3'-5' exonuclease (proofreading) activity. May be involved in translesional synthesis, in conjunction with the beta clamp from PolIII. The sequence is that of DNA polymerase IV from Escherichia coli (strain ATCC 8739 / DSM 1576 / NBRC 3972 / NCIMB 8545 / WDCM 00012 / Crooks).